The sequence spans 289 residues: Cyclin-dependent kinase inhibitor 4 (289 aa).

3 disordered regions span residues 1 to 31, 56 to 160, and 227 to 248; these read MGKYIRKSKIDGAGAGAGGGGGGGGGGESSI, LQQQ…VSES, and SESNQREDSLSRSHRRRPTTPE. The segment covering 13–28 has biased composition (gly residues); sequence AGAGAGGGGGGGGGGE. Positions 56-80 are enriched in low complexity; sequence LQQQQQRCLLQKPSSPSSLPPTSAS. Over residues 134-144 the composition is skewed to polar residues; the sequence is CGRNPNPRSNL.

Belongs to the CDI family. ICK/KRP subfamily. In terms of assembly, specifically interacts with CDKA-1, but not with CDKB1-1. Interacts with CYCD4-1. Binds to FBL17. In terms of tissue distribution, expressed in leaves and flowers and at lower levels in roots.

The protein resides in the nucleus. It is found in the nucleoplasm. Functionally, binds and inhibits CYCD2-1/CDKA-1 complex kinase activity. May target specifically CDKA-1. The protein is Cyclin-dependent kinase inhibitor 4 (KRP4) of Arabidopsis thaliana (Mouse-ear cress).